A 75-amino-acid chain; its full sequence is Defensin-like protein (75 aa).

Positions 1–24 (MEKKSIAGLCFLFLVLFVAQEVVV) are cleaved as a signal peptide. Disulfide bonds link cysteine 31–cysteine 75, cysteine 42–cysteine 63, cysteine 48–cysteine 69, and cysteine 52–cysteine 71.

The protein belongs to the DEFL family.

It is found in the secreted. Functionally, this protein is required for germination. The chain is Defensin-like protein from Vigna unguiculata (Cowpea).